The following is a 311-amino-acid chain: Putative ABC transporter ATP-binding protein MG467 (311 aa).

The 227-residue stretch at 84–310 (ITINKMWKNV…IVSNQLVRPL (227 aa)) folds into the ABC transporter domain. ATP is bound at residue 122-129 (GSSGSGKT).

The protein belongs to the ABC transporter superfamily.

The sequence is that of Putative ABC transporter ATP-binding protein MG467 from Mycoplasma genitalium (strain ATCC 33530 / DSM 19775 / NCTC 10195 / G37) (Mycoplasmoides genitalium).